The following is a 74-amino-acid chain: RNA-binding protein Hfq (74 aa).

One can recognise a Sm domain in the interval 9–69 (DQYLNQLRKN…ISTFSPVKNV (61 aa)).

Belongs to the Hfq family. In terms of assembly, homohexamer.

Functionally, RNA chaperone that binds small regulatory RNA (sRNAs) and mRNAs to facilitate mRNA translational regulation in response to envelope stress, environmental stress and changes in metabolite concentrations. Also binds with high specificity to tRNAs. The chain is RNA-binding protein Hfq from Oceanobacillus iheyensis (strain DSM 14371 / CIP 107618 / JCM 11309 / KCTC 3954 / HTE831).